Here is a 163-residue protein sequence, read N- to C-terminus: Putative pre-16S rRNA nuclease (163 aa).

The protein belongs to the YqgF nuclease family.

It is found in the cytoplasm. Its function is as follows. Could be a nuclease involved in processing of the 5'-end of pre-16S rRNA. The polypeptide is Putative pre-16S rRNA nuclease (Roseobacter denitrificans (strain ATCC 33942 / OCh 114) (Erythrobacter sp. (strain OCh 114))).